The primary structure comprises 356 residues: Phosphate acyltransferase (356 aa).

This sequence belongs to the PlsX family. Homodimer. Probably interacts with PlsY.

The protein resides in the cytoplasm. It catalyses the reaction a fatty acyl-[ACP] + phosphate = an acyl phosphate + holo-[ACP]. Its pathway is lipid metabolism; phospholipid metabolism. Catalyzes the reversible formation of acyl-phosphate (acyl-PO(4)) from acyl-[acyl-carrier-protein] (acyl-ACP). This enzyme utilizes acyl-ACP as fatty acyl donor, but not acyl-CoA. This is Phosphate acyltransferase from Stutzerimonas stutzeri (strain A1501) (Pseudomonas stutzeri).